The primary structure comprises 380 residues: Glucose-1-phosphate adenylyltransferase (380 aa).

Alpha-D-glucose 1-phosphate-binding positions include Tyr99, Gly164, 179–180 (EK), and Ser190.

This sequence belongs to the bacterial/plant glucose-1-phosphate adenylyltransferase family. In terms of assembly, homotetramer.

It catalyses the reaction alpha-D-glucose 1-phosphate + ATP + H(+) = ADP-alpha-D-glucose + diphosphate. The protein operates within glycan biosynthesis; glycogen biosynthesis. Involved in the biosynthesis of ADP-glucose, a building block required for the elongation reactions to produce glycogen. Catalyzes the reaction between ATP and alpha-D-glucose 1-phosphate (G1P) to produce pyrophosphate and ADP-Glc. This Bacillus subtilis (strain 168) protein is Glucose-1-phosphate adenylyltransferase.